Here is a 414-residue protein sequence, read N- to C-terminus: Histidine--tRNA ligase (414 aa).

This sequence belongs to the class-II aminoacyl-tRNA synthetase family. Homodimer.

It localises to the cytoplasm. It carries out the reaction tRNA(His) + L-histidine + ATP = L-histidyl-tRNA(His) + AMP + diphosphate + H(+). The sequence is that of Histidine--tRNA ligase from Mycoplasma capricolum subsp. capricolum (strain California kid / ATCC 27343 / NCTC 10154).